Here is a 198-residue protein sequence, read N- to C-terminus: Outer-membrane lipoprotein carrier protein (198 aa).

The signal sequence occupies residues 1–17; sequence MKKFLFSLCLLSSTVLA.

It belongs to the LolA family. Monomer.

The protein resides in the periplasm. Participates in the translocation of lipoproteins from the inner membrane to the outer membrane. Only forms a complex with a lipoprotein if the residue after the N-terminal Cys is not an aspartate (The Asp acts as a targeting signal to indicate that the lipoprotein should stay in the inner membrane). In Aliivibrio fischeri (strain ATCC 700601 / ES114) (Vibrio fischeri), this protein is Outer-membrane lipoprotein carrier protein.